Consider the following 365-residue polypeptide: Peptide chain release factor 2 (365 aa).

Gln252 bears the N5-methylglutamine mark.

This sequence belongs to the prokaryotic/mitochondrial release factor family. Post-translationally, methylated by PrmC. Methylation increases the termination efficiency of RF2.

Its subcellular location is the cytoplasm. Functionally, peptide chain release factor 2 directs the termination of translation in response to the peptide chain termination codons UGA and UAA. The chain is Peptide chain release factor 2 from Aeromonas salmonicida (strain A449).